A 198-amino-acid polypeptide reads, in one-letter code: Recombination protein RecR (198 aa).

The C4-type zinc finger occupies 57-72 (CSICCNLSEHDPCPIC). The Toprim domain maps to 80–175 (NIVCVVETPQ…KVTRLGYGLP (96 aa)).

It belongs to the RecR family.

Its function is as follows. May play a role in DNA repair. It seems to be involved in an RecBC-independent recombinational process of DNA repair. It may act with RecF and RecO. In Endomicrobium trichonymphae, this protein is Recombination protein RecR.